A 455-amino-acid polypeptide reads, in one-letter code: Ribulose bisphosphate carboxylase large chain (455 aa).

Lys5 is modified (N6,N6,N6-trimethyllysine). Substrate contacts are provided by Asn114 and Thr164. Lys166 acts as the Proton acceptor in catalysis. Lys168 is a substrate binding site. Positions 192, 194, and 195 each coordinate Mg(2+). The residue at position 192 (Lys192) is an N6-carboxylysine. The active-site Proton acceptor is His285. Residues Arg286, His318, and Ser370 each coordinate substrate.

It belongs to the RuBisCO large chain family. Type I subfamily. As to quaternary structure, heterohexadecamer of 8 large chains and 8 small chains; disulfide-linked. The disulfide link is formed within the large subunit homodimers. Mg(2+) serves as cofactor. In terms of processing, the disulfide bond which can form in the large chain dimeric partners within the hexadecamer appears to be associated with oxidative stress and protein turnover.

Its subcellular location is the plastid. The protein localises to the chloroplast. The catalysed reaction is 2 (2R)-3-phosphoglycerate + 2 H(+) = D-ribulose 1,5-bisphosphate + CO2 + H2O. It catalyses the reaction D-ribulose 1,5-bisphosphate + O2 = 2-phosphoglycolate + (2R)-3-phosphoglycerate + 2 H(+). RuBisCO catalyzes two reactions: the carboxylation of D-ribulose 1,5-bisphosphate, the primary event in carbon dioxide fixation, as well as the oxidative fragmentation of the pentose substrate in the photorespiration process. Both reactions occur simultaneously and in competition at the same active site. This chain is Ribulose bisphosphate carboxylase large chain, found in Lupinus digitatus (Lupine).